The sequence spans 221 residues: Deoxyribose-phosphate aldolase (221 aa).

Aspartate 96 functions as the Proton donor/acceptor in the catalytic mechanism. Lysine 157 functions as the Schiff-base intermediate with acetaldehyde in the catalytic mechanism. Lysine 185 (proton donor/acceptor) is an active-site residue.

The protein belongs to the DeoC/FbaB aldolase family. DeoC type 1 subfamily.

It is found in the cytoplasm. The enzyme catalyses 2-deoxy-D-ribose 5-phosphate = D-glyceraldehyde 3-phosphate + acetaldehyde. The protein operates within carbohydrate degradation; 2-deoxy-D-ribose 1-phosphate degradation; D-glyceraldehyde 3-phosphate and acetaldehyde from 2-deoxy-alpha-D-ribose 1-phosphate: step 2/2. Its function is as follows. Catalyzes a reversible aldol reaction between acetaldehyde and D-glyceraldehyde 3-phosphate to generate 2-deoxy-D-ribose 5-phosphate. In Crocosphaera subtropica (strain ATCC 51142 / BH68) (Cyanothece sp. (strain ATCC 51142)), this protein is Deoxyribose-phosphate aldolase.